Consider the following 169-residue polypeptide: Protein GrpE (169 aa).

Positions 1-25 are disordered; it reads MSEEKQNGQIQEETVENSENQNNEL. Over residues 7-23 the composition is skewed to polar residues; that stretch reads NGQIQEETVENSENQNN.

The protein belongs to the GrpE family. As to quaternary structure, homodimer.

The protein localises to the cytoplasm. Its function is as follows. Participates actively in the response to hyperosmotic and heat shock by preventing the aggregation of stress-denatured proteins, in association with DnaK and GrpE. It is the nucleotide exchange factor for DnaK and may function as a thermosensor. Unfolded proteins bind initially to DnaJ; upon interaction with the DnaJ-bound protein, DnaK hydrolyzes its bound ATP, resulting in the formation of a stable complex. GrpE releases ADP from DnaK; ATP binding to DnaK triggers the release of the substrate protein, thus completing the reaction cycle. Several rounds of ATP-dependent interactions between DnaJ, DnaK and GrpE are required for fully efficient folding. The sequence is that of Protein GrpE from Campylobacter lari (strain RM2100 / D67 / ATCC BAA-1060).